The following is a 530-amino-acid chain: Cytochrome P450 monooxygenase ausG (530 aa).

A helical transmembrane segment spans residues Leu-31–Phe-51. Cys-470 contributes to the heme binding site.

It belongs to the cytochrome P450 family. The cofactor is heme.

It is found in the membrane. It functions in the pathway secondary metabolite biosynthesis; terpenoid biosynthesis. Functionally, cytochrome P450 monooxygenase; part of the gene cluster B that mediates the biosynthesis of the fungal meroterpenoid acetoxydehydroaustin. The first step of the pathway is the synthesis of 3,5-dimethylorsellinic acid by the polyketide synthase ausA. 3,5-dimethylorsellinic acid is then prenylated by the polyprenyl transferase ausN. Further epoxidation by the FAD-dependent monooxygenase ausM and cyclization by the probable terpene cyclase ausL lead to the formation of protoaustinoid A. Protoaustinoid A is then oxidized to spiro-lactone preaustinoid A3 by the combined action of the FAD-binding monooxygenases ausB and ausC, and the dioxygenase ausE. Acid-catalyzed keto-rearrangement and ring contraction of the tetraketide portion of preaustinoid A3 by ausJ lead to the formation of preaustinoid A4. The aldo-keto reductase ausK, with the help of ausH, is involved in the next step by transforming preaustinoid A4 into isoaustinone which is in turn hydroxylated by the P450 monooxygenase ausI to form austinolide. The cytochrome P450 monooxygenase ausG then modifies austinolide to austinol. Austinol is further acetylated to austin by the O-acetyltransferase ausP, which spontaneously changes to dehydroaustin. The cytochrome P450 monooxygenase then converts dehydroaustin is into 7-dehydrodehydroaustin. The hydroxylation catalyzed by ausR permits the second O-acetyltransferase ausQ to add an additional acetyl group to the molecule, leading to the formation of acetoxydehydroaustin. Due to genetic rearrangements of the clusters and the subsequent loss of some enzymes, the end product of the Penicillium brasilianum austinoid biosynthesis clusters is acetoxydehydroaustin. The chain is Cytochrome P450 monooxygenase ausG from Penicillium brasilianum.